Consider the following 1033-residue polypeptide: Integrin alpha-IIb (1033 aa).

The signal sequence occupies residues 1–31; that stretch reads MARASCAWHSLWLLQWTPLFLGPSAVPPVWA. The Extracellular portion of the chain corresponds to 32 to 988; sequence LNLDSEKFSV…TQLLRALEER (957 aa). FG-GAP repeat units lie at residues 35–96, 109–173, 184–237, 252–304, 305–370, 372–431, and 434–495; these read DSEK…GGKC, NLGF…GRAE, SVYA…ISSY, TYDN…DSYY, QPLH…PQAL, TPTL…GLSP, and SQVL…VQDS. Asn46 and Asn75 each carry an N-linked (GlcNAc...) asparagine glycan. 3 cysteine pairs are disulfide-bonded: Cys87-Cys96, Cys138-Cys161, and Cys177-Cys197. Ca(2+) is bound by residues Glu273, Asp275, Asp277, Thr280, Glu282, Asp327, Asn329, Asp331, Arg333, Asp335, Asp395, Asp399, Tyr401, Asp403, Asp456, Asp458, Asn460, Tyr462, and Asp464. Disulfide bonds link Cys503/Cys514 and Cys520/Cys575. The N-linked (GlcNAc...) asparagine glycan is linked to Asn600. Intrachain disulfides connect Cys632–Cys638, Cys704–Cys717, Cys856–Cys916, and Cys905–Cys911. N-linked (GlcNAc...) asparagine glycosylation is present at Asn710. N-linked (GlcNAc...) asparagine glycosylation is present at Asn957. The chain crosses the membrane as a helical span at residues 989-1014; that stretch reads AIPVWWVLVGVLGGLLLLTLLVLAMW. Residues 1015–1033 are Cytoplasmic-facing; sequence KAGFFKRNRPPLEEDEEEE. Positions 1017–1021 match the GFFKR motif motif; the sequence is GFFKR.

It belongs to the integrin alpha chain family. In terms of assembly, heterodimer of an alpha and a beta subunit. The alpha subunit is composed of a heavy and a light chain linked by a disulfide bond. Alpha-IIb associates with beta-3. Directly interacts with RNF181. Interacts (via C-terminus cytoplasmic tail region) with CIB1; the interaction is direct and calcium-dependent. Interacts (via C-terminus cytoplasmic tail region) with CIB2, CIB3 and CIB4; the interactions are stabilized/increased in a calcium and magnesium-dependent manner. ITGA2B:ITGB3 interacts with PPIA/CYPA; the interaction is ROS and PPIase activity-dependent and is increased in the presence of thrombin. ITGA2B:ITGB3 interacts with SELP (via C-type lectin domain); the interaction mediates cell-cell interaction and adhesion. Cleaved by ELANE; the cleavage promotes activation of platelet fibrinogen receptor integrin alpha-IIb/beta-3.

The protein localises to the membrane. In terms of biological role, integrin alpha-IIb/beta-3 is a receptor for fibronectin, fibrinogen, plasminogen, prothrombin, thrombospondin and vitronectin. It recognizes the sequence R-G-D in a wide array of ligands. It recognizes the sequence H-H-L-G-G-G-A-K-Q-A-G-D-V in fibrinogen gamma chain. Following activation integrin alpha-IIb/beta-3 brings about platelet/platelet interaction through binding of soluble fibrinogen. This step leads to rapid platelet aggregation which physically plugs ruptured endothelial cell surface. In Mus musculus (Mouse), this protein is Integrin alpha-IIb (Itga2b).